A 199-amino-acid chain; its full sequence is Glycerol-3-phosphate acyltransferase (199 aa).

Transmembrane regions (helical) follow at residues 5 to 25 (AFLVLTYLLGAFPFGLVVALV), 51 to 71 (KLGVLTLVLDLAKGLVPVLCA), 79 to 99 (VFLSMVAVAAVVGHMYSVFLY), 112 to 132 (VFLGGAPIPALLSVAVCVAVI), and 153 to 173 (CAWLGPVFLVPAAAIIGGLVI).

This sequence belongs to the PlsY family. In terms of assembly, probably interacts with PlsX.

The protein resides in the cell inner membrane. It catalyses the reaction an acyl phosphate + sn-glycerol 3-phosphate = a 1-acyl-sn-glycero-3-phosphate + phosphate. The protein operates within lipid metabolism; phospholipid metabolism. In terms of biological role, catalyzes the transfer of an acyl group from acyl-phosphate (acyl-PO(4)) to glycerol-3-phosphate (G3P) to form lysophosphatidic acid (LPA). This enzyme utilizes acyl-phosphate as fatty acyl donor, but not acyl-CoA or acyl-ACP. The polypeptide is Glycerol-3-phosphate acyltransferase (Solidesulfovibrio magneticus (strain ATCC 700980 / DSM 13731 / RS-1) (Desulfovibrio magneticus)).